A 61-amino-acid chain; its full sequence is Large ribosomal subunit protein eL37 (61 aa).

Residues C19, C22, C34, and C37 each coordinate Zn(2+). Residues C19–C37 form a C4-type zinc finger.

It belongs to the eukaryotic ribosomal protein eL37 family. Zn(2+) is required as a cofactor.

Functionally, binds to the 23S rRNA. The sequence is that of Large ribosomal subunit protein eL37 from Sulfolobus acidocaldarius (strain ATCC 33909 / DSM 639 / JCM 8929 / NBRC 15157 / NCIMB 11770).